Reading from the N-terminus, the 325-residue chain is Acetyl-coenzyme A carboxylase carboxyl transferase subunit alpha (325 aa).

The CoA carboxyltransferase C-terminal domain occupies 35 to 292 (EINKLEARLE…DDVLKRSLRE (258 aa)).

It belongs to the AccA family. As to quaternary structure, acetyl-CoA carboxylase is a heterohexamer composed of biotin carboxyl carrier protein (AccB), biotin carboxylase (AccC) and two subunits each of ACCase subunit alpha (AccA) and ACCase subunit beta (AccD).

The protein resides in the cytoplasm. It carries out the reaction N(6)-carboxybiotinyl-L-lysyl-[protein] + acetyl-CoA = N(6)-biotinyl-L-lysyl-[protein] + malonyl-CoA. Its pathway is lipid metabolism; malonyl-CoA biosynthesis; malonyl-CoA from acetyl-CoA: step 1/1. In terms of biological role, component of the acetyl coenzyme A carboxylase (ACC) complex. First, biotin carboxylase catalyzes the carboxylation of biotin on its carrier protein (BCCP) and then the CO(2) group is transferred by the carboxyltransferase to acetyl-CoA to form malonyl-CoA. The polypeptide is Acetyl-coenzyme A carboxylase carboxyl transferase subunit alpha (Anoxybacillus flavithermus (strain DSM 21510 / WK1)).